The primary structure comprises 629 residues: 1-deoxy-D-xylulose-5-phosphate synthase (629 aa).

Residues His-72 and 113 to 115 contribute to the thiamine diphosphate site; that span reads GHS. Residue Asp-144 participates in Mg(2+) binding. Residues 145–146, Asn-173, Tyr-284, and Glu-366 each bind thiamine diphosphate; that span reads GA. Mg(2+) is bound at residue Asn-173.

It belongs to the transketolase family. DXPS subfamily. As to quaternary structure, homodimer. It depends on Mg(2+) as a cofactor. Thiamine diphosphate is required as a cofactor.

It catalyses the reaction D-glyceraldehyde 3-phosphate + pyruvate + H(+) = 1-deoxy-D-xylulose 5-phosphate + CO2. Its pathway is metabolic intermediate biosynthesis; 1-deoxy-D-xylulose 5-phosphate biosynthesis; 1-deoxy-D-xylulose 5-phosphate from D-glyceraldehyde 3-phosphate and pyruvate: step 1/1. In terms of biological role, catalyzes the acyloin condensation reaction between C atoms 2 and 3 of pyruvate and glyceraldehyde 3-phosphate to yield 1-deoxy-D-xylulose-5-phosphate (DXP). The polypeptide is 1-deoxy-D-xylulose-5-phosphate synthase (Halalkalibacterium halodurans (strain ATCC BAA-125 / DSM 18197 / FERM 7344 / JCM 9153 / C-125) (Bacillus halodurans)).